A 162-amino-acid chain; its full sequence is Larval cuticle protein F1 (162 aa).

A run of 4 repeats spans residues 27 to 30 (AAPV), 43 to 46 (AAPV), 59 to 62 (AAPV), and 75 to 78 (AAPA).

Functionally, component of the larval cuticle. The sequence is that of Larval cuticle protein F1 from Tenebrio molitor (Yellow mealworm beetle).